The sequence spans 167 residues: CDP-archaeol synthase (167 aa).

A run of 5 helical transmembrane segments spans residues 4–24 (ILEA…PVIL), 51–71 (GFLG…IIYP), 80–100 (FKVS…GSFI), 104–124 (LNLP…LISA), and 139–158 (VLLL…VLAY).

The protein belongs to the CDP-archaeol synthase family. Mg(2+) serves as cofactor.

It localises to the cell membrane. The catalysed reaction is 2,3-bis-O-(geranylgeranyl)-sn-glycerol 1-phosphate + CTP + H(+) = CDP-2,3-bis-O-(geranylgeranyl)-sn-glycerol + diphosphate. It functions in the pathway membrane lipid metabolism; glycerophospholipid metabolism. In terms of biological role, catalyzes the formation of CDP-2,3-bis-(O-geranylgeranyl)-sn-glycerol (CDP-archaeol) from 2,3-bis-(O-geranylgeranyl)-sn-glycerol 1-phosphate (DGGGP) and CTP. This reaction is the third ether-bond-formation step in the biosynthesis of archaeal membrane lipids. The sequence is that of CDP-archaeol synthase from Pyrococcus furiosus (strain ATCC 43587 / DSM 3638 / JCM 8422 / Vc1).